The primary structure comprises 421 residues: MWCHRLSHLQSRLQDLLRGRVTRWALQQSNFKSLFPLAIYWHHTASKSLNCVWQQHEDHFELQYANNVMRFDYVWLRDHCRSASCYNSKTHQRSLDTASVDLCIQPQTIHLDETTLFFTWPDGHVTRYDLDWLMKNSYEGQKQKVIQPRILWNAEIYQQAQVPAVDFQTFLETKEGLKNFLQNFLLYGIAFVENVPPTQKHTEKLAERISLIRETIYGRMWFFTSDFSRGDTAYTKLALDRHTDTTYFQEPCGIQVFHCLKHEGTGGRTLLVDGFYAAEQVLQKAPEEFELLSKVPLKHEYIENVGECQNHMIGVGPVLNIYPWNKELYLIRYNNYDRAVINTVPYDVVHRWYTAHRTLTRELRRPENEFWVKLKPGKVLFIDNWRVLHGRESFTGYRQLCGCYLTRDDVLNTARLLGLQA.

Residues 1-15 (MWCHRLSHLQSRLQD) constitute a mitochondrion transit peptide. The residue at position 236 (lysine 236) is an N6-acetyllysine. Residues histidine 242, aspartate 244, and histidine 389 each coordinate Fe cation.

This sequence belongs to the gamma-BBH/TMLD family. In terms of assembly, homodimer. Requires Fe(2+) as cofactor. The cofactor is L-ascorbate.

Its subcellular location is the mitochondrion matrix. It catalyses the reaction N(6),N(6),N(6)-trimethyl-L-lysine + 2-oxoglutarate + O2 = (3S)-3-hydroxy-N(6),N(6),N(6)-trimethyl-L-lysine + succinate + CO2. It participates in amine and polyamine biosynthesis; carnitine biosynthesis. Its function is as follows. Converts trimethyllysine (TML) into hydroxytrimethyllysine (HTML). The sequence is that of Trimethyllysine dioxygenase, mitochondrial (TMLHE) from Bos taurus (Bovine).